Consider the following 472-residue polypeptide: Violaxanthin de-epoxidase, chloroplastic (472 aa).

Intrachain disulfides connect Cys133/Cys151, Cys138/Cys145, Cys157/Cys174, Cys161/Cys170, Cys189/Cys196, and Cys242/Cys372. The stretch at 379–462 (VERLEKTVEE…MEAGEVEKLF (84 aa)) forms a coiled coil.

The protein belongs to the calycin superfamily. Lipocalin family. Disulfide bonds. Reduction of the disulfides results in loss of a rigid structure, a decrease in thermal stability of 15 degrees Celsius and a loss of activity.

The protein resides in the plastid. The protein localises to the chloroplast thylakoid membrane. It catalyses the reaction all-trans-violaxanthin + 2 L-ascorbate = all-trans-zeaxanthin + 2 L-dehydroascorbate + 2 H2O. Its activity is regulated as follows. Irreversibly inhibited by DTT and iodoacetamide at pH 5.7 or pH 5.2, but not at pH 7.2. Regulated through Ca(2+) gating of H(+) flux at the CFoH(+) channel. Requires the presence of lipids forming reverse hexagonal structures such as monogalactosyldiacylglyceride (MGDG) or phosphatidylethanolamine. A negative curvature elastic stress in the thylakoid lipid bilayer is required for VDE1 activity. Functionally, part of the xanthophyll (or violaxanthin) cycle for controlling the concentration of zeaxanthin in chloroplasts. Catalyzes the two-step mono de-epoxidation reaction. Stereospecific for all-trans xanthophylls. Zeaxanthin induces the dissipation of excitation energy in the chlorophyll of the light-harvesting protein complex of photosystem II. This chain is Violaxanthin de-epoxidase, chloroplastic, found in Spinacia oleracea (Spinach).